Consider the following 148-residue polypeptide: Macrodomain Ter protein (148 aa).

This sequence belongs to the MatP family. As to quaternary structure, homodimer.

Its subcellular location is the cytoplasm. Its function is as follows. Required for spatial organization of the terminus region of the chromosome (Ter macrodomain) during the cell cycle. Prevents early segregation of duplicated Ter macrodomains during cell division. Binds specifically to matS, which is a 13 bp signature motif repeated within the Ter macrodomain. The chain is Macrodomain Ter protein from Photobacterium profundum (strain SS9).